The following is a 965-amino-acid chain: Villin-3 (965 aa).

6 Gelsolin-like repeats span residues 27 to 79 (ENFE…DEAG), 150 to 190 (VHLK…QERA), 262 to 304 (GQVE…EERK), 401 to 452 (ANSK…EDQE), 533 to 573 (NKAL…EQQE), and 635 to 676 (FQVE…KEKQ). Low complexity-rich tracts occupy residues 769–780 (AFNSSSGRTSSP) and 808–828 (SSPSSKSPPRRSGLTSQASQR). 2 disordered regions span residues 769–828 (AFNS…ASQR) and 840–906 (TAEK…GVTF). The span at 865 to 879 (EATEEATEAKEEEEV) shows a compositional bias: acidic residues. Ser880 carries the phosphoserine modification. The 66-residue stretch at 900–965 (ETTGVTFTYE…DLLKKKFNLF (66 aa)) folds into the HP domain.

The protein belongs to the villin/gelsolin family. In terms of tissue distribution, expressed in all tissues examined, including root hairs.

It is found in the cytoplasm. The protein localises to the cytoskeleton. In terms of biological role, binds actin and actin filament bundles in a Ca(2+)-insensitive manner, but severs actin filaments in a calcium-dependent manner, regardless of the presence or not of VLN1 (AC O81643). Acts redundantly with VLN2 (AC O81644) to generate thick actin filament bundles, to regulate directional organ growth and in sclerenchyma development. This Arabidopsis thaliana (Mouse-ear cress) protein is Villin-3.